A 604-amino-acid chain; its full sequence is Elongation factor 4 (604 aa).

The tr-type G domain occupies 4–186 (EFIRNFSIIA…AIVHLVPPPK (183 aa)). Residues 16 to 21 (DHGKST) and 133 to 136 (NKID) each bind GTP.

The protein belongs to the TRAFAC class translation factor GTPase superfamily. Classic translation factor GTPase family. LepA subfamily.

Its subcellular location is the cell inner membrane. It carries out the reaction GTP + H2O = GDP + phosphate + H(+). Its function is as follows. Required for accurate and efficient protein synthesis under certain stress conditions. May act as a fidelity factor of the translation reaction, by catalyzing a one-codon backward translocation of tRNAs on improperly translocated ribosomes. Back-translocation proceeds from a post-translocation (POST) complex to a pre-translocation (PRE) complex, thus giving elongation factor G a second chance to translocate the tRNAs correctly. Binds to ribosomes in a GTP-dependent manner. The protein is Elongation factor 4 of Solibacter usitatus (strain Ellin6076).